We begin with the raw amino-acid sequence, 89 residues long: Alpha-ketoglutarate dehydrogenase subunit 4, mitochondrial (89 aa).

The protein belongs to the alpha-ketoglutarate dehydrogenase component 4 family. In terms of assembly, component of the 2-oxoglutarate dehydrogenase complex (OGDC), also called alpha-ketoglutarate dehydrogenase (KGDH) complex. The copmplex is composed of the catalytic subunits OGDH (2-oxoglutarate dehydrogenase kgd1; also called E1 subunit), DLST (dihydrolipoamide succinyltransferase kgd2; also called E2 subunit) and DLD (dihydrolipoamide dehydrogenase dld1; also called E3 subunit), and the assembly factor KGD4. Within OGDC, interacts (via N-terminus) with E3 subunit and (via C-terminus) with the complex core formed by E1 and E2 subunits.

It localises to the mitochondrion. Its function is as follows. Molecular adapter that is necessary to a form a stable 2-oxoglutarate dehydrogenase enzyme complex (OGDC). Required for incorporation of the E3 subunit (dld1) into the E1-E2 core (kgd1-kgd2) of mitochondrial OGDC, and acting as a stability factor for the fully assembled complex. This is Alpha-ketoglutarate dehydrogenase subunit 4, mitochondrial (kgd4) from Schizosaccharomyces pombe (strain 972 / ATCC 24843) (Fission yeast).